A 325-amino-acid chain; its full sequence is Foldase protein PrsA (325 aa).

An N-terminal signal peptide occupies residues 1–20 (MKLMNKIIVPVTASALLLGA). A lipid anchor (N-palmitoyl cysteine) is attached at cysteine 21. Cysteine 21 carries S-diacylglycerol cysteine lipidation. In terms of domain architecture, PpiC spans 139–245 (ENSKKTSHIL…YGYHIIKADK (107 aa)). Disordered stretches follow at residues 159–200 (EGLS…SAKK) and 303–325 (PDKI…NSGS).

Belongs to the PrsA family.

Its subcellular location is the cell membrane. It carries out the reaction [protein]-peptidylproline (omega=180) = [protein]-peptidylproline (omega=0). In terms of biological role, plays a major role in protein secretion by helping the post-translocational extracellular folding of several secreted proteins. This Staphylococcus epidermidis (strain ATCC 35984 / DSM 28319 / BCRC 17069 / CCUG 31568 / BM 3577 / RP62A) protein is Foldase protein PrsA.